The primary structure comprises 268 residues: Nickel import ATP-binding protein NikE (268 aa).

The region spanning 4 to 252 is the ABC transporter domain; sequence LNVSGLSHHY…SSDAGRVLQN (249 aa). 45 to 52 is an ATP binding site; it reads GRSGCGKS.

The protein belongs to the ABC transporter superfamily. Nickel importer (TC 3.A.1.5.3) family. In terms of assembly, the complex is composed of two ATP-binding proteins (NikD and NikE), two transmembrane proteins (NikB and NikC) and a solute-binding protein (NikA).

The protein localises to the cell inner membrane. It carries out the reaction Ni(2+)(out) + ATP + H2O = Ni(2+)(in) + ADP + phosphate + H(+). In terms of biological role, part of the ABC transporter complex NikABCDE involved in nickel import. Responsible for energy coupling to the transport system. This is Nickel import ATP-binding protein NikE from Shigella sonnei (strain Ss046).